Consider the following 88-residue polypeptide: FXYD domain-containing ion transport regulator 4 (88 aa).

The signal sequence occupies residues 1 to 20 (MEEITCAFLLLLAGLPALEA). At 21 to 38 (SDPVDKDSPFYYDWESLQ) the chain is on the extracellular side. A helical transmembrane segment spans residues 39 to 59 (LGGLIFGGLLCIAGIAMALSG). Residues 60 to 88 (KCKCRRTHKPSSLPGKATPLIIPGSANTC) are Cytoplasmic-facing.

The protein belongs to the FXYD family. Regulatory subunit of the sodium/potassium-transporting ATPase which is composed of a catalytic alpha subunit, a non-catalytic beta subunit and a regulatory subunit. The regulatory subunit, a member of the FXYD protein family, modulates the enzymatic activity in a tissue- and isoform-specific way by changing affinities of the Na+/K+-ATPase toward Na(+), K(+) or ATP.

It is found in the cell membrane. It localises to the basolateral cell membrane. Associates with and regulates the activity of the sodium/potassium-transporting ATPase (NKA) which catalyzes the hydrolysis of ATP coupled with the exchange of Na(+) and K(+) ions across the plasma membrane. Increases the apparent affinity of the transporter for Na(+) and increases NKA activity. The polypeptide is FXYD domain-containing ion transport regulator 4 (Fxyd4) (Mus musculus (Mouse)).